The chain runs to 129 residues: MYLHLLKSKIHNAIVTSGDLEYEGSITIDSELLDLAGMIPNEKVLVVNNNNGERFETYIIKGDHGSREIQLNGAAARCALPGDEIIIMTFAVMEEAEARNYKPMVLIVDRHNNPKSRHLVGEQSEPLSN.

Serine 25 serves as the catalytic Schiff-base intermediate with substrate; via pyruvic acid. Serine 25 carries the post-translational modification Pyruvic acid (Ser). Position 57 (threonine 57) interacts with substrate. Catalysis depends on tyrosine 58, which acts as the Proton donor. 73-75 (GAA) is a substrate binding site.

The protein belongs to the PanD family. Heterooctamer of four alpha and four beta subunits. Requires pyruvate as cofactor. In terms of processing, is synthesized initially as an inactive proenzyme, which is activated by self-cleavage at a specific serine bond to produce a beta-subunit with a hydroxyl group at its C-terminus and an alpha-subunit with a pyruvoyl group at its N-terminus.

It localises to the cytoplasm. The enzyme catalyses L-aspartate + H(+) = beta-alanine + CO2. It participates in cofactor biosynthesis; (R)-pantothenate biosynthesis; beta-alanine from L-aspartate: step 1/1. Catalyzes the pyruvoyl-dependent decarboxylation of aspartate to produce beta-alanine. The sequence is that of Aspartate 1-decarboxylase from Chlorobium chlorochromatii (strain CaD3).